The primary structure comprises 1002 residues: Protein SMAX1-LIKE 7 (1002 aa).

The Clp R domain occupies 8–185; that stretch reads ARQCLTEETA…DVLHPPVTSQ (178 aa). Repeat regions lie at residues 12 to 86 and 103 to 185; these read LTEE…LDRL and VSNS…VTSQ. Residues 854–858 carry the EAR motif; it reads LDLNL.

It belongs to the ClpA/ClpB family. Interacts with TPL/TPR in an EAR-motif dependent manner. Interacts with TPL, TPR1, TPR2 and TPR4. Interacts with MAX2 and TPR2. Interacts with D14. The interaction with D14 occurs in the presence of (2'R) stereoisomers of strigolactones, but not (2'S) stereoisomers. Ubiquitinated upon strigolactone treatment. Strigolactone, but not karrikin, triggers rapid SCF(MAX2)-dependent degradation. Expressed in axillary branches and roots. Detected in seedlings and leaves. Expressed in the primary rosette buds and expanding leaves of adult rosettes, the vasculature of the hypocotyls, cotyledons, and mature roots, and in the midvein and petioles of young leaves.

It is found in the nucleus. Functionally, probable component of a transcriptional corepressor complex involved in branching control. Regulates cotyledon expansion and lateral root growth, but not germination or hypocotyl elongation. Promotes auxin transport and PIN1 accumulation in the stem and represses BRC1/TCP18 expression in axillary buds. The sequence is that of Protein SMAX1-LIKE 7 from Arabidopsis thaliana (Mouse-ear cress).